The primary structure comprises 93 residues: Probable Fe(2+)-trafficking protein (93 aa).

This sequence belongs to the Fe(2+)-trafficking protein family.

Could be a mediator in iron transactions between iron acquisition and iron-requiring processes, such as synthesis and/or repair of Fe-S clusters in biosynthetic enzymes. The sequence is that of Probable Fe(2+)-trafficking protein from Acidithiobacillus ferrooxidans (strain ATCC 23270 / DSM 14882 / CIP 104768 / NCIMB 8455) (Ferrobacillus ferrooxidans (strain ATCC 23270)).